The primary structure comprises 107 residues: uncharacterized protein (107 aa).

This is an uncharacterized protein from Yersinia pseudotuberculosis serotype I (strain IP32953).